The chain runs to 336 residues: Atypical chemokine receptor 1 (336 aa).

The Extracellular portion of the chain corresponds to M1–P63. N-linked (GlcNAc...) asparagine glycans are attached at residues N16, N27, and N33. Disulfide bonds link C51/C276 and C129/C195. Residues F64–F84 form a helical membrane-spanning segment. The Cytoplasmic portion of the chain corresponds to R85 to G95. A helical transmembrane segment spans residues W96–L116. The Extracellular segment spans residues A117–C129. Residues S130–L153 traverse the membrane as a helical segment. Over G154–T166 the chain is Cytoplasmic. A helical membrane pass occupies residues L167 to A187. Topologically, residues S188–Q207 are extracellular. The chain crosses the membrane as a helical span at residues A208–A228. The Cytoplasmic portion of the chain corresponds to K229 to N244. The chain crosses the membrane as a helical span at residues I245 to L265. Residues V266–N287 lie on the Extracellular side of the membrane. The chain crosses the membrane as a helical span at residues L288–C308. Residues H309–S336 are Cytoplasmic-facing.

The protein belongs to the G-protein coupled receptor 1 family. Atypical chemokine receptor subfamily.

The protein resides in the early endosome. The protein localises to the recycling endosome. It localises to the membrane. Atypical chemokine receptor that controls chemokine levels and localization via high-affinity chemokine binding that is uncoupled from classic ligand-driven signal transduction cascades, resulting instead in chemokine sequestration, degradation, or transcytosis. Also known as interceptor (internalizing receptor) or chemokine-scavenging receptor or chemokine decoy receptor. Has a promiscuous chemokine-binding profile, interacting with inflammatory chemokines of both the CXC and the CC subfamilies but not with homeostatic chemokines. Acts as a receptor for chemokines including CCL2, CCL5, CCL7, CCL11, CCL13, CCL14, CCL17, CXCL5, CXCL6, IL8/CXCL8, CXCL11, GRO, RANTES, MCP-1 and TARC. May regulate chemokine bioavailability and, consequently, leukocyte recruitment through two distinct mechanisms: when expressed in endothelial cells, it sustains the abluminal to luminal transcytosis of tissue-derived chemokines and their subsequent presentation to circulating leukocytes; when expressed in erythrocytes, serves as blood reservoir of cognate chemokines but also as a chemokine sink, buffering potential surges in plasma chemokine levels. The protein is Atypical chemokine receptor 1 (ACKR1) of Papio hamadryas (Hamadryas baboon).